Here is a 652-residue protein sequence, read N- to C-terminus: Threonine--tRNA ligase (652 aa).

Residues 1 to 63 (MAEISLTFPD…TESGDFQLIT (63 aa)) enclose the TGS domain. A catalytic region spans residues 246–545 (DHRVIGRDLD…LIEMYKGAFP (300 aa)). Cys-340, His-391, and His-522 together coordinate Zn(2+).

Belongs to the class-II aminoacyl-tRNA synthetase family. In terms of assembly, homodimer. Zn(2+) is required as a cofactor.

The protein resides in the cytoplasm. The catalysed reaction is tRNA(Thr) + L-threonine + ATP = L-threonyl-tRNA(Thr) + AMP + diphosphate + H(+). Functionally, catalyzes the attachment of threonine to tRNA(Thr) in a two-step reaction: L-threonine is first activated by ATP to form Thr-AMP and then transferred to the acceptor end of tRNA(Thr). Also edits incorrectly charged L-seryl-tRNA(Thr). The polypeptide is Threonine--tRNA ligase (Leuconostoc mesenteroides subsp. mesenteroides (strain ATCC 8293 / DSM 20343 / BCRC 11652 / CCM 1803 / JCM 6124 / NCDO 523 / NBRC 100496 / NCIMB 8023 / NCTC 12954 / NRRL B-1118 / 37Y)).